The sequence spans 152 residues: MAKLTILIALVAALVLVVHTSAFRSSEQSCKRQLQQVNLRHCENHIDQRIQQQQEEEEDRARKLRGIKHVILRHKSSQESEESEELDQCCEQLNELNSQRCQCRALQQIYESQSEQCEGRQQEQQLEGELEKLPRICGFGPLRRCNINPDEE.

Positions 1–22 (MAKLTILIALVAALVLVVHTSA) are cleaved as a signal peptide. Intrachain disulfides connect cysteine 30–cysteine 101, cysteine 42–cysteine 89, cysteine 90–cysteine 137, and cysteine 103–cysteine 145.

Belongs to the 2S seed storage albumins family. Heterodimer of a small chain and a large chain; disulfide-linked. In terms of tissue distribution, expressed in developing cotyledons and in the embryonic axis of germinating seeds.

The protein resides in the endoplasmic reticulum. The sequence is that of Conglutin delta 1 from Lupinus angustifolius (Narrow-leaved blue lupine).